The chain runs to 191 residues: Ribosome maturation factor RimM (191 aa).

The 78-residue stretch at 114-191 (EDEYYWVDLI…RIVVDWQPDY (78 aa)) folds into the PRC barrel domain.

Belongs to the RimM family. In terms of assembly, binds ribosomal protein uS19.

It is found in the cytoplasm. An accessory protein needed during the final step in the assembly of 30S ribosomal subunit, possibly for assembly of the head region. Essential for efficient processing of 16S rRNA. May be needed both before and after RbfA during the maturation of 16S rRNA. It has affinity for free ribosomal 30S subunits but not for 70S ribosomes. This is Ribosome maturation factor RimM from Paracidovorax citrulli (strain AAC00-1) (Acidovorax citrulli).